The primary structure comprises 573 residues: SHC-transforming protein 2 (573 aa).

Positions 125-309 constitute a PID domain; the sequence is LGPGVSYIVR…LEELAWGDDD (185 aa). The CH1 stretch occupies residues 310 to 477; sequence AAADHNYYNS…PTEEQLRQEP (168 aa). A phosphotyrosine mark is found at tyrosine 316, tyrosine 317, and tyrosine 395. An SH2 domain is found at 478-569; the sequence is WYHGRMSRRA…ESELHLRGVV (92 aa).

In terms of assembly, interacts with the Trk receptors in a phosphotyrosine-dependent manner and MEGF12. Once activated, binds to GRB2. In terms of processing, phosphorylated on tyrosine by the Trk receptors. As to expression, expressed in brain. Expressed at high level in the hypothalamus and at low level in the caudate nucleus.

Its function is as follows. Signaling adapter that couples activated growth factor receptors to signaling pathway in neurons. Involved in the signal transduction pathways of neurotrophin-activated Trk receptors in cortical neurons. This Mus musculus (Mouse) protein is SHC-transforming protein 2 (Shc2).